The following is a 262-amino-acid chain: Cyclin-dependent kinase inhibitor 1 (262 aa).

The segment at 140–212 is disordered; sequence SDVAEAGSEH…SAQQATRPKI (73 aa). Over residues 160–169 the composition is skewed to basic and acidic residues; that stretch reads SGRDRERRET. The segment covering 198 to 208 has biased composition (low complexity); that stretch reads SAATASAQQAT.

Belongs to the CDI family. ICK/KRP subfamily. In terms of tissue distribution, expressed in roots, stems, leaves and apex.

Its function is as follows. Regulates the production of endosperm cells, affecting seed filling and embryo development. Regulates endoreduplication of endosperm cells. May play a role in the exit from the mitotic cell cycle during rice grain formation. Inhibitis leaf elongation rates by decreasing cell number, that is partly compensated by increased cell size. May not affect growth rate or cell size of the primary root. The polypeptide is Cyclin-dependent kinase inhibitor 1 (KRP1) (Oryza sativa subsp. japonica (Rice)).